Here is a 368-residue protein sequence, read N- to C-terminus: N-acetylneuraminate epimerase 2 (368 aa).

Residues 1–19 (MNKTITALAILMASFAANA) form the signal peptide. Kelch repeat units follow at residues 40 to 84 (TVYI…AFID), 86 to 137 (NLYV…FVHN), 139 to 173 (KAYV…KINA), 174 to 219 (YYFD…VNKG), 222 to 265 (TWLI…VAGG), 287 to 336 (ENYQ…LWNN), and 338 to 367 (LLII…VTVQ). The Proton acceptor role is filled by E228.

The protein belongs to the NanM family. As to quaternary structure, homodimer.

The protein localises to the periplasm. It carries out the reaction N-acetyl-alpha-neuraminate = N-acetyl-beta-neuraminate. Converts alpha-N-acetylneuranimic acid (Neu5Ac) to the beta-anomer, accelerating the equilibrium between the alpha- and beta-anomers. Probably facilitates sialidase-negative bacteria to compete successfully for limited amounts of extracellular Neu5Ac, which is likely taken up in the beta-anomer. In addition, the rapid removal of sialic acid from solution might be advantageous to the bacterium to damp down host responses. In Escherichia coli O6:H1 (strain CFT073 / ATCC 700928 / UPEC), this protein is N-acetylneuraminate epimerase 2.